We begin with the raw amino-acid sequence, 261 residues long: Pimeloyl-[acyl-carrier protein] methyl ester esterase (261 aa).

Residues 16-241 enclose the AB hydrolase-1 domain; it reads LVLLHGWGLN…HAAHAPFISH (226 aa). Residues tryptophan 22, 82–83, and 143–147 each bind substrate; these read SL and FLALQ. The Nucleophile role is filled by serine 82. Active-site residues include aspartate 207 and histidine 235. Residue histidine 235 coordinates substrate.

Belongs to the AB hydrolase superfamily. Carboxylesterase BioH family. Monomer.

It localises to the cytoplasm. The enzyme catalyses 6-carboxyhexanoyl-[ACP] methyl ester + H2O = 6-carboxyhexanoyl-[ACP] + methanol + H(+). The protein operates within cofactor biosynthesis; biotin biosynthesis. Functionally, the physiological role of BioH is to remove the methyl group introduced by BioC when the pimeloyl moiety is complete. It allows to synthesize pimeloyl-ACP via the fatty acid synthetic pathway through the hydrolysis of the ester bonds of pimeloyl-ACP esters. The sequence is that of Pimeloyl-[acyl-carrier protein] methyl ester esterase from Photorhabdus laumondii subsp. laumondii (strain DSM 15139 / CIP 105565 / TT01) (Photorhabdus luminescens subsp. laumondii).